Reading from the N-terminus, the 310-residue chain is Ribosomal RNA small subunit methyltransferase H (310 aa).

Residues Gly47–His49, Asp66, Phe93, Asp108, and Gln115 contribute to the S-adenosyl-L-methionine site.

It belongs to the methyltransferase superfamily. RsmH family.

Its subcellular location is the cytoplasm. The enzyme catalyses cytidine(1402) in 16S rRNA + S-adenosyl-L-methionine = N(4)-methylcytidine(1402) in 16S rRNA + S-adenosyl-L-homocysteine + H(+). In terms of biological role, specifically methylates the N4 position of cytidine in position 1402 (C1402) of 16S rRNA. The polypeptide is Ribosomal RNA small subunit methyltransferase H (Prochlorococcus marinus (strain MIT 9303)).